Reading from the N-terminus, the 542-residue chain is Chaperonin GroEL (542 aa).

Residues threonine 29–proline 32, aspartate 86–threonine 90, glycine 413, asparagine 476–alanine 478, and aspartate 492 contribute to the ATP site.

The protein belongs to the chaperonin (HSP60) family. In terms of assembly, forms a cylinder of 14 subunits composed of two heptameric rings stacked back-to-back. Interacts with the co-chaperonin GroES.

Its subcellular location is the cytoplasm. It carries out the reaction ATP + H2O + a folded polypeptide = ADP + phosphate + an unfolded polypeptide.. In terms of biological role, together with its co-chaperonin GroES, plays an essential role in assisting protein folding. The GroEL-GroES system forms a nano-cage that allows encapsulation of the non-native substrate proteins and provides a physical environment optimized to promote and accelerate protein folding. The chain is Chaperonin GroEL from Lactococcus lactis subsp. cremoris (strain SK11).